We begin with the raw amino-acid sequence, 498 residues long: MRINPTTSGSGVSTLEKKNPGRVVQIIGPVLDVAFPPGKMPNIYNALVVQGRDSVGQPINVACEVQQLLGNNRVRAIAMSATEGLTRGMEVIDTGAPISVPVGGATLGRIFNVLGEPVDNLGPVDTSTTSPIHRSAPAFIQLDTKLSIFETGIEVVDLLAPYRRGGKIGLFGGAGVGKTVLIMELINNIAKAHGGVSVFGGVGERTREGNDLYMEMKESGVINEENIAESKVALVYGQMNEPPGARMRVGLTALTMAEYFRDVNEQDVLLFIDNIFRFVQAGSEVSALLGRMPSAVGYQPTLSTEMGSLQERITSTKEGSITSIQAVYVPADDLTDPAPATTFAHLDATTVLSRGLAAKGIYPAVDPLDSTSTMLQPRIVGEEHYETAQRVKQTLQRYKELQDIIAILGLDELSEEDRLLVARARKIERFLSQPFFVAEVFTGSPGKYVGLAETIRGFQLILSGELDGLPEQAFYLVGNIDEATAKAMNLEMESNLKK.

Gly-172–Thr-179 lines the ATP pocket.

This sequence belongs to the ATPase alpha/beta chains family. F-type ATPases have 2 components, CF(1) - the catalytic core - and CF(0) - the membrane proton channel. CF(1) has five subunits: alpha(3), beta(3), gamma(1), delta(1), epsilon(1). CF(0) has four main subunits: a(1), b(1), b'(1) and c(9-12).

It is found in the plastid. Its subcellular location is the chloroplast thylakoid membrane. The enzyme catalyses ATP + H2O + 4 H(+)(in) = ADP + phosphate + 5 H(+)(out). In terms of biological role, produces ATP from ADP in the presence of a proton gradient across the membrane. The catalytic sites are hosted primarily by the beta subunits. In Nicotiana tabacum (Common tobacco), this protein is ATP synthase subunit beta, chloroplastic.